The primary structure comprises 644 residues: Sodium/hydrogen exchanger 9 (644 aa).

The Lumenal segment spans residues 1–20 (MERQRRFMSEKDEYQFQHQG). The helical transmembrane segment at 21–41 (AVELLVFNFLLILTILTIWLF) threads the bilayer. At 42 to 45 (KNHR) the chain is on the cytoplasmic side. The helical transmembrane segment at 46 to 66 (FRFLHETGGAMVYGLIMGLIL) threads the bilayer. Residues 67–126 (RYATAPTDIESGTVYDCGKLAFSPSTLLINITDQVYEYKYKREISQHNINPHLGNAILEK) lie on the Lumenal side of the membrane. Residues 127-147 (MTFDPEIFFNVLLPPIIFHAG) form a helical membrane-spanning segment. Residues 148–164 (YSLKKRHFFQNLGSILT) are Cytoplasmic-facing. The helical transmembrane segment at 165–185 (YAFLGTAISCIVIGLIMYGFV) threads the bilayer. Residues 186–203 (KAMVYAGQLKNGDFHFTD) lie on the Lumenal side of the membrane. Residues 204-224 (CLFFGSLMSATDPVTVLAIFH) traverse the membrane as a helical segment. Over 225–235 (ELHVDPDLYTL) the chain is Cytoplasmic. A helical transmembrane segment spans residues 236–256 (LFGESVLNDAVAIVLTYSISI). Topologically, residues 257–277 (YSPKENPNAFDAAAFFQSVGN) are lumenal. Residues 278–298 (FLGIFAGSFAMGSAYAVVTAL) traverse the membrane as a helical segment. Residues 299-301 (LTK) are Cytoplasmic-facing. Helical transmembrane passes span 302–322 (FTKL…LSWS) and 323–343 (AFLS…FCGV). Residues 344-364 (TQAHYTYNNLSLDSKMRTKQL) are Cytoplasmic-facing. Residues 365-385 (FEFMNFLAENVIFCYMGLALF) traverse the membrane as a helical segment. A topological domain (lumenal) is located at residue threonine 386. Residues 387–407 (FQNHIFNALFILGAFLAIFVA) traverse the membrane as a helical segment. Over 408–429 (RACNIYPLSFLLNLGRKHKIPW) the chain is Cytoplasmic. The helical transmembrane segment at 430 to 450 (NFQHMMMFSGLRGAIAFALAI) threads the bilayer. Residues 451–465 (RDTESQPKQMMFSTT) are Lumenal-facing. A helical transmembrane segment spans residues 466–486 (LLLVFFTVWVFGGGTTPMLTW). Topologically, residues 487–644 (LQIRVGVDLD…EQTPGQSQLN (158 aa)) are cytoplasmic. The disordered stretch occupies residues 593–622 (QAASPCSPPTRLGLDQKAAPQTPGKENIYE).

This sequence belongs to the monovalent cation:proton antiporter 1 (CPA1) transporter (TC 2.A.36) family. Homodimer; phosphatidylinositol-4,5-bisphosphate (PIP2) and phosphatidylinositol 3,4,5-trisphosphate (PIP3) could be involved in the dimer stabilization. Interacts (via the C-terminus) with RACK1. Interacts with CHP1.

It is found in the late endosome membrane. Its subcellular location is the early endosome membrane. It localises to the recycling endosome membrane. The protein resides in the cell membrane. The protein localises to the cytoplasmic vesicle. It is found in the phagosome membrane. The catalysed reaction is Na(+)(in) + H(+)(out) = Na(+)(out) + H(+)(in). It carries out the reaction K(+)(in) + H(+)(out) = K(+)(out) + H(+)(in). Its function is as follows. Endosomal Na(+), K(+)/H(+) antiporter. Mediates the electroneutral exchange of endosomal luminal H(+) for a cytosolic Na(+) or K(+). By facilitating proton efflux, SLC9A9 counteracts the acidity generated by vacuolar (V)-ATPase, thereby limiting luminal acidification. Regulates organellar pH and consequently, endosome maturation and endocytic trafficking of plasma membrane receptors and neurotransporters. Promotes the recycling of transferrin receptors back to the cell surface to facilitate additional iron uptake in the brain. Regulates synaptic transmission by regulating the luminal pH of axonal endosomes. Regulates phagosome lumenal pH, thus affecting phagosome maturation, and consequently, microbicidal activity in macrophages. Can also be active at the cell surface of specialized cells, e.g., in the inner ear hair bundles uses the high K(+) of the endolymph to regulate intracelular pH. This is Sodium/hydrogen exchanger 9 (SLC9A9) from Equus caballus (Horse).